The primary structure comprises 704 residues: Pentatricopeptide repeat-containing protein At4g28010 (704 aa).

PPR repeat units follow at residues 71 to 105 (LAFA…DTFI), 106 to 140 (NFVS…GFAF), 141 to 175 (NVYN…SLMP), 176 to 210 (DVFS…GCSW), 211 to 245 (SLVT…GLEA), 246 to 280 (DLVV…GDSP), 281 to 315 (CAIT…GVRP), 316 to 350 (NVYT…DEEP), 351 to 385 (NAVT…RTRP), 386 to 416 (DNIT…MLKD), 423 to 453 (DVIS…LVEK), 458 to 492 (DRVT…KIVR), 493 to 527 (NSDT…ELQP), 528 to 562 (SVFD…NNFP), 563 to 597 (DVVS…GLSP), 598 to 632 (DLFT…GFEP), and 633 to 667 (DAHI…DIVL).

This sequence belongs to the PPR family. P subfamily.

This Arabidopsis thaliana (Mouse-ear cress) protein is Pentatricopeptide repeat-containing protein At4g28010.